We begin with the raw amino-acid sequence, 664 residues long: Transketolase 1 (664 aa).

A substrate-binding site is contributed by histidine 26. Thiamine diphosphate contacts are provided by residues histidine 66 and glycine 114–leucine 116. Residue aspartate 155 participates in Mg(2+) binding. Positions 156 and 185 each coordinate thiamine diphosphate. Mg(2+)-binding residues include asparagine 185 and isoleucine 187. Residues histidine 260, arginine 357, and serine 384 each coordinate substrate. A thiamine diphosphate-binding site is contributed by histidine 260. Glutamate 411 (proton donor) is an active-site residue. Residue phenylalanine 437 coordinates thiamine diphosphate. Substrate-binding residues include histidine 461, aspartate 469, and arginine 520.

It belongs to the transketolase family. As to quaternary structure, homodimer. Mg(2+) is required as a cofactor. Requires Ca(2+) as cofactor. Mn(2+) serves as cofactor. It depends on Co(2+) as a cofactor. The cofactor is thiamine diphosphate.

It carries out the reaction D-sedoheptulose 7-phosphate + D-glyceraldehyde 3-phosphate = aldehydo-D-ribose 5-phosphate + D-xylulose 5-phosphate. In terms of biological role, catalyzes the transfer of a two-carbon ketol group from a ketose donor to an aldose acceptor, via a covalent intermediate with the cofactor thiamine pyrophosphate. In Vibrio parahaemolyticus serotype O3:K6 (strain RIMD 2210633), this protein is Transketolase 1 (tkt1).